Reading from the N-terminus, the 295-residue chain is Glycine--tRNA ligase alpha subunit (295 aa).

The protein belongs to the class-II aminoacyl-tRNA synthetase family. In terms of assembly, tetramer of two alpha and two beta subunits.

It is found in the cytoplasm. The enzyme catalyses tRNA(Gly) + glycine + ATP = glycyl-tRNA(Gly) + AMP + diphosphate. The sequence is that of Glycine--tRNA ligase alpha subunit from Desulforamulus reducens (strain ATCC BAA-1160 / DSM 100696 / MI-1) (Desulfotomaculum reducens).